We begin with the raw amino-acid sequence, 708 residues long: Protein SUPPRESSOR OF MAX2 1A (708 aa).

The tract at residues glutamine 248 to threonine 283 is disordered. Positions phenylalanine 537–glutamate 541 match the EAR motif.

This sequence belongs to the ClpA/ClpB family.

Functionally, probable component of a transcriptional corepressor complex that acts downstream of MAX2 to negatively regulate karrikins/strigolactone responses. Involved in the (-)-germacrene D signaling pathway influencing plant fitness and occurring in the stigma in a KAI2IA-dependent manner. This Petunia hybrida (Petunia) protein is Protein SUPPRESSOR OF MAX2 1A.